Here is a 912-residue protein sequence, read N- to C-terminus: Translation initiation factor IF-2 (912 aa).

Residues 26–297 form a disordered region; that stretch reads SDQGEFVKSA…RGRKSKRAKR (272 aa). Residues 56-74 are compositionally biased toward low complexity; the sequence is KPAPAASNGAAAEAAAPPK. The span at 100-120 shows a compositional bias: pro residues; that stretch reads APEPPAAPAAPAAPAPKPSPA. Positions 121–131 are enriched in low complexity; the sequence is ARPAAAEAAAP. 3 stretches are compositionally biased toward pro residues: residues 132-152, 173-183, and 192-218; these read APAP…PGAP, PRPQAPRPGAP, and NMPP…PGGG. A compositionally biased stretch (gly residues) spans 219–283; sequence PRPGGAGRPG…GAAGAFGRPG (65 aa). Residues 287–296 are compositionally biased toward basic residues; sequence KRGRKSKRAK. The region spanning 408-579 is the tr-type G domain; that stretch reads TRPPVVTVMG…AVLLTADAAL (172 aa). Positions 417 to 424 are G1; it reads GHVDHGKT. 417-424 serves as a coordination point for GTP; that stretch reads GHVDHGKT. Residues 442-446 are G2; that stretch reads GITQH. Positions 467 to 470 are G3; it reads DTPG. Residues 467–471 and 521–524 each bind GTP; these read DTPGH and NKID. The tract at residues 521–524 is G4; sequence NKID. The segment at 557 to 559 is G5; that stretch reads SAR.

It belongs to the TRAFAC class translation factor GTPase superfamily. Classic translation factor GTPase family. IF-2 subfamily.

It localises to the cytoplasm. Its function is as follows. One of the essential components for the initiation of protein synthesis. Protects formylmethionyl-tRNA from spontaneous hydrolysis and promotes its binding to the 30S ribosomal subunits. Also involved in the hydrolysis of GTP during the formation of the 70S ribosomal complex. The chain is Translation initiation factor IF-2 from Mycobacteroides abscessus (strain ATCC 19977 / DSM 44196 / CCUG 20993 / CIP 104536 / JCM 13569 / NCTC 13031 / TMC 1543 / L948) (Mycobacterium abscessus).